An 87-amino-acid polypeptide reads, in one-letter code: Small ribosomal subunit protein bS20 (87 aa).

Positions 1–27 (MANIKSAKKRALQSERRRQHNASRRSM) are enriched in basic residues. The disordered stretch occupies residues 1–31 (MANIKSAKKRALQSERRRQHNASRRSMTRTS).

It belongs to the bacterial ribosomal protein bS20 family.

Its function is as follows. Binds directly to 16S ribosomal RNA. The chain is Small ribosomal subunit protein bS20 from Pseudoalteromonas atlantica (strain T6c / ATCC BAA-1087).